Consider the following 389-residue polypeptide: bZIP transcription factor 68 (389 aa).

The segment covering 1-16 (MGSSEMEKSGKEKEPK) has biased composition (basic and acidic residues). Disordered regions lie at residues 1 to 42 (MGSS…VSAG), 124 to 154 (MAEA…KRSK), 170 to 236 (AGKN…NLPV), 285 to 318 (QPWL…RKQA), and 356 to 389 (SSLK…QDVA). Residues 19-32 (PPSTSSSAPATVVS) are compositionally biased toward low complexity. The segment covering 137-149 (GDGKPSDGKEKLP) has biased composition (basic and acidic residues). Residue lysine 154 forms a Glycyl lysine isopeptide (Lys-Gly) (interchain with G-Cter in ubiquitin) linkage. Over residues 170-205 (AGKNSGASANGACSKSAESGSDGSSDGSDANSQNDS) the composition is skewed to low complexity. 2 stretches are compositionally biased toward basic and acidic residues: residues 206–215 (GSRHNGKDGE) and 304–318 (SNRE…RKQA). Residues 295 to 358 (EIKRQRRKQS…EELLAENSSL (64 aa)) enclose the bZIP domain. The basic motif stretch occupies residues 297–316 (KRQRRKQSNRESARRSRLRK). The segment at 323–358 (LAQRAEVLNGENSSLRAEINKLKSQYEELLAENSSL) is leucine-zipper. Residues 356-366 (SSLKNKFSSAP) show a composition bias toward polar residues. Basic and acidic residues predominate over residues 372–389 (DLDKNEQEPQRSTRQDVA).

It belongs to the bZIP family. In terms of assembly, monomer, homodimer and heterodimers with GBF1/BZIP41, GBF2/BZIP54 and GBF3/BZIP55. Heterodimers with BZIP16. Interacts with GIP1.

The protein resides in the nucleus. Functionally, transcriptional activator that binds to the G-box motif (5'-CACGTG-3') and other cis-acting elements with 5'-ACGT-3' core, such as Hex, C-box and as-1 motifs. Possesses high binding affinity to G-box, much lower affinity to Hex and C-box, and little affinity to as-1 element. G-box and G-box-like motifs are cis-acting elements defined in promoters of certain plant genes which are regulated by such diverse stimuli as light-induction or hormone control. Binds to the G-box motif 5'-CACGTG-3' of LHCB2.4 (At3g27690) promoter. May act as transcriptional activator in light-regulated expression of LHCB2.4. Probably binds DNA as monomer. DNA-binding activity is redox-dependent. This chain is bZIP transcription factor 68, found in Arabidopsis thaliana (Mouse-ear cress).